We begin with the raw amino-acid sequence, 1144 residues long: Formin-like protein 18 (1144 aa).

The Phosphatase tensin-type domain occupies 17–193 (LEISERVYVF…QYISRRNVGS (177 aa)). The active-site Phosphocysteine intermediate is the Cys-126. Positions 199–338 (DQALTLDCVN…FSAEVIFSEM (140 aa)) constitute a C2 tensin-type domain. Disordered regions lie at residues 429–463 (ISEN…SILK) and 482–729 (KIFS…KGRG). Residues 441–450 (SPEKEKDTMS) are compositionally biased toward basic and acidic residues. Residues 491–522 (SPVTSPLPNRSPTQGSPASISRFHSSPSSLGI) are compositionally biased toward polar residues. Over residues 526-536 (LHDHGSCKDEE) the composition is skewed to basic and acidic residues. The span at 538–548 (TSSSPASPSIS) shows a compositional bias: low complexity. Residues 555–580 (PLTSSQPKKASPQCPQSPTPVHSNGP) are compositionally biased toward polar residues. Pro residues predominate over residues 603–613 (RPPPPPPPPPI). Low complexity predominate over residues 614–629 (SSLRSTPSPSSTSNSI). Residues 633–643 (GPPPPPPPPPL) are compositionally biased toward pro residues. Positions 644–653 (QSHRSALSSS) are enriched in low complexity. Over residues 669–678 (NPPPPPPPPL) the composition is skewed to pro residues. Low complexity predominate over residues 679–695 (HSNSRMGAPTSSLVLKS). The span at 696–705 (PPVPPPPAPA) shows a compositional bias: pro residues. The FH2 domain maps to 735–1135 (KGQGQTRKAN…RAQKEAENEK (401 aa)).

It belongs to the formin-like family. Class-II subfamily.

This Arabidopsis thaliana (Mouse-ear cress) protein is Formin-like protein 18 (FH18).